The primary structure comprises 734 residues: DNA-binding protein RFX2 (734 aa).

Polar residues predominate over residues 1 to 23 (MQRSEGGSETPSTVALRTSTSAQ). Positions 1–31 (MQRSEGGSETPSTVALRTSTSAQAPVVQPVP) are disordered. A DNA-binding region (RFX-type winged-helix) is located at residues 204–279 (HLQWLLDNYE…YHYYGIRLKP (76 aa)). The disordered stretch occupies residues 694 to 722 (DTSFSDDMTSDGDMSRMSERSLTEPAVKR). Residues 706 to 722 (DMSRMSERSLTEPAVKR) are compositionally biased toward basic and acidic residues.

The protein belongs to the RFX family. Homodimer. Heterodimer; heterodimerizes with other rfx proteins.

The protein localises to the nucleus. It is found in the cytoplasm. Functionally, transcription factor that acts as a key regulator of ciliogenesis. Specifically regulates expression of genes required for cilium assembly and function. Recognizes and binds the X-box, a regulatory motif with DNA sequence 5'-GTNRCC(0-3N)RGYAAC-3' present on promoters. The chain is DNA-binding protein RFX2 (rfx2) from Danio rerio (Zebrafish).